The primary structure comprises 638 residues: Phosphomethylpyrimidine synthase (638 aa).

Substrate is bound by residues N236, M265, Y294, H330, 350 to 352, 391 to 394, and E430; these read SRG and DGLR. Position 434 (H434) interacts with Zn(2+). Y457 lines the substrate pocket. H498 serves as a coordination point for Zn(2+). [4Fe-4S] cluster contacts are provided by C578, C581, and C586. Over residues 608-624 the composition is skewed to low complexity; sequence AEGASQQEAEQGMQEMS. Residues 608–633 form a disordered region; it reads AEGASQQEAEQGMQEMSQKYKDAGRR.

It belongs to the ThiC family. In terms of assembly, homodimer. The cofactor is [4Fe-4S] cluster.

The catalysed reaction is 5-amino-1-(5-phospho-beta-D-ribosyl)imidazole + S-adenosyl-L-methionine = 4-amino-2-methyl-5-(phosphooxymethyl)pyrimidine + CO + 5'-deoxyadenosine + formate + L-methionine + 3 H(+). The protein operates within cofactor biosynthesis; thiamine diphosphate biosynthesis. Catalyzes the synthesis of the hydroxymethylpyrimidine phosphate (HMP-P) moiety of thiamine from aminoimidazole ribotide (AIR) in a radical S-adenosyl-L-methionine (SAM)-dependent reaction. The sequence is that of Phosphomethylpyrimidine synthase from Hahella chejuensis (strain KCTC 2396).